Consider the following 297-residue polypeptide: MAEITASMVKELREKTDAPMMECKKALTEAGGDMAKAEEVLRIKLGNKASKAAARVTAEGIVGTYLSADGKLAAMVELNCETDFVAKNDDFIGLAGSLATLVATKNPADVEALSALELDGQTVEAFRTALVGKIGENITVRRFSRIEAKGQVASYVHAGAKIGVLVDLVGGDEQLAKDLAMHIAASKPKSLDASGVSQELIESERRIAVEKAREAGKPEAMLEKIAEGTVQKFLKEVTLLGQPFVKDDKQTVEALLKARGASVASFVLYIVGEGIEKKVTDFAAEVAEQAAAAAAKK.

The interval 82 to 85 (TDFV) is involved in Mg(2+) ion dislocation from EF-Tu.

This sequence belongs to the EF-Ts family.

It is found in the cytoplasm. Its function is as follows. Associates with the EF-Tu.GDP complex and induces the exchange of GDP to GTP. It remains bound to the aminoacyl-tRNA.EF-Tu.GTP complex up to the GTP hydrolysis stage on the ribosome. This chain is Elongation factor Ts, found in Azoarcus sp. (strain BH72).